The primary structure comprises 364 residues: Histidinol-phosphate aminotransferase (364 aa).

K222 is subject to N6-(pyridoxal phosphate)lysine.

This sequence belongs to the class-II pyridoxal-phosphate-dependent aminotransferase family. Histidinol-phosphate aminotransferase subfamily. In terms of assembly, homodimer. The cofactor is pyridoxal 5'-phosphate.

It catalyses the reaction L-histidinol phosphate + 2-oxoglutarate = 3-(imidazol-4-yl)-2-oxopropyl phosphate + L-glutamate. It functions in the pathway amino-acid biosynthesis; L-histidine biosynthesis; L-histidine from 5-phospho-alpha-D-ribose 1-diphosphate: step 7/9. This Brevibacillus brevis (strain 47 / JCM 6285 / NBRC 100599) protein is Histidinol-phosphate aminotransferase.